We begin with the raw amino-acid sequence, 250 residues long: Probable aquaporin TIP1-1 (250 aa).

The next 2 membrane-spanning stretches (helical) occupy residues 25 to 44 (AEFI…GMAF) and 58 to 77 (LIAA…SVGA). The NPA 1 motif lies at 85 to 87 (NPA). The next 3 helical transmembrane spans lie at 103 to 121 (GLLY…CFLL), 144 to 163 (LVLE…ATAV), and 170 to 192 (LGTI…GGAF). The NPA 2 motif lies at 198-200 (NPA). A helical membrane pass occupies residues 216–233 (WVYWVGPLIGGGLAGVIY).

Belongs to the MIP/aquaporin (TC 1.A.8) family. TIP (TC 1.A.8.10) subfamily. As to expression, expressed in roots and leaves.

Its subcellular location is the vacuole membrane. In terms of biological role, aquaporins facilitate the transport of water and small neutral solutes across cell membranes. May be involved in transport from the vacuolar compartment to the cytoplasm. The protein is Probable aquaporin TIP1-1 (TIP1-1) of Oryza sativa subsp. japonica (Rice).